Reading from the N-terminus, the 398-residue chain is MNSLDFDRKPEDTRVVVAMSGGVDSSVVAGLLKREGYDVLGITLQLYDHGAAVHRAGSCCAGQDIDDARRVCETIGIPHYVLDYEARFRETVINPFAESYIAGETPIPCVACNQTVKFADLLATAKELGADALATGHYIRSRPSPMPRYPGQRALYRPADADRDQSYFLFATTQEQIDYLRFPLGGLPKSETRALAEEMGLVVAKKADSQDICFVPQGKYSDIVSKLKPNAALAGEIVHLDGRVLGAHEGILHYTIGQRRGIGVATGEPLYVVYLDARSRRVVVGPKEALETRRVYLRDVNWLGDEELEAAARSGFECFAKVRSTRRPAPAVLSCDAEGLYVELVEGEAGVAPGQACALYSGIGEDARVYGGGFIRRSEREPAAEAALKALLQAPAAA.

ATP-binding positions include 18-25 (AMSGGVDS) and Leu-44. Cys-112 (nucleophile) is an active-site residue. A disulfide bond links Cys-112 and Cys-213. Residue Gly-136 participates in ATP binding. An interaction with tRNA region spans residues 163–165 (RDQ). Catalysis depends on Cys-213, which acts as the Cysteine persulfide intermediate.

The protein belongs to the MnmA/TRMU family.

The protein localises to the cytoplasm. The enzyme catalyses S-sulfanyl-L-cysteinyl-[protein] + uridine(34) in tRNA + AH2 + ATP = 2-thiouridine(34) in tRNA + L-cysteinyl-[protein] + A + AMP + diphosphate + H(+). In terms of biological role, catalyzes the 2-thiolation of uridine at the wobble position (U34) of tRNA, leading to the formation of s(2)U34. This Sinorhizobium medicae (strain WSM419) (Ensifer medicae) protein is tRNA-specific 2-thiouridylase MnmA.